Here is a 75-residue protein sequence, read N- to C-terminus: Large ribosomal subunit protein bL31 (75 aa).

It belongs to the bacterial ribosomal protein bL31 family. Type A subfamily. Part of the 50S ribosomal subunit.

Binds the 23S rRNA. This is Large ribosomal subunit protein bL31 from Rhodopseudomonas palustris (strain BisB18).